We begin with the raw amino-acid sequence, 284 residues long: Bifunctional protein FolD (284 aa).

NADP(+) is bound by residues 165–167 and Ser-190; that span reads GRS.

This sequence belongs to the tetrahydrofolate dehydrogenase/cyclohydrolase family. Homodimer.

The catalysed reaction is (6R)-5,10-methylene-5,6,7,8-tetrahydrofolate + NADP(+) = (6R)-5,10-methenyltetrahydrofolate + NADPH. The enzyme catalyses (6R)-5,10-methenyltetrahydrofolate + H2O = (6R)-10-formyltetrahydrofolate + H(+). The protein operates within one-carbon metabolism; tetrahydrofolate interconversion. Its function is as follows. Catalyzes the oxidation of 5,10-methylenetetrahydrofolate to 5,10-methenyltetrahydrofolate and then the hydrolysis of 5,10-methenyltetrahydrofolate to 10-formyltetrahydrofolate. The protein is Bifunctional protein FolD of Streptococcus pyogenes serotype M2 (strain MGAS10270).